Reading from the N-terminus, the 680-residue chain is Dipeptidyl carboxypeptidase (680 aa).

His469 contributes to the Zn(2+) binding site. Residue Glu470 is part of the active site. Residues His473 and His476 each coordinate Zn(2+).

The protein belongs to the peptidase M3 family. Zn(2+) is required as a cofactor.

The protein resides in the cytoplasm. It catalyses the reaction Hydrolysis of unblocked, C-terminal dipeptides from oligopeptides, with broad specificity. Does not hydrolyze bonds in which P1' is Pro, or both P1 and P1' are Gly.. Removes dipeptides from the C-termini of N-blocked tripeptides, tetrapeptides and larger peptides. This chain is Dipeptidyl carboxypeptidase (dcp), found in Salmonella typhimurium (strain LT2 / SGSC1412 / ATCC 700720).